The chain runs to 621 residues: Microbial serine proteinase (621 aa).

Positions 1–24 (MRKTSLALAISALLSALPIASVQA) are cleaved as a signal peptide. The region spanning 68–440 (PRGGMAGNDL…FGLVDVNKTQ (373 aa)) is the Peptidase S8 domain. Asp98 (charge relay system) is an active-site residue. The tract at residues 114–133 (PGSKNVVTGGSDPTPTDPDR) is disordered. Residues His137 and Ser354 each act as charge relay system in the active site. A P/Homo B domain is found at 454 to 619 (AVALAKGKGN…GYSVLGHDAA (166 aa)). Positions 457-485 (LAKGKGNGRSPSAPSRYVGSSPTRSSTQV) are disordered. Over residues 465-485 (RSPSAPSRYVGSSPTRSSTQV) the composition is skewed to polar residues.

Belongs to the peptidase S8 family.

Functionally, agent of furonculosis. This Aeromonas salmonicida protein is Microbial serine proteinase (aspA).